The following is a 79-amino-acid chain: Serine rich endogenous peptide 2 (79 aa).

Residues 1–19 (MANNLGLVILLLVIVLVSC) form the signal peptide. The segment at 25 to 79 (CALASPQKSRPSSEWRRKLIPVRSSRSPRSPSFAPKKPPPPPPSPPLSPSSPPSN) is disordered. The SCOOP motif signature appears at 45–57 (PVRSSRSPRSPSF). Low complexity predominate over residues 45–59 (PVRSSRSPRSPSFAP). The SxS motif essential for MIK2 binding signature appears at 49-51 (SRS). The segment covering 60–79 (KKPPPPPPSPPLSPSSPPSN) has biased composition (pro residues).

Belongs to the serine rich endogenous peptide (SCOOP) phytocytokine family. Interacts with MIK2 (via extracellular leucine-rich repeat domain); this interaction triggers the formation of complex between MIK2 and the BAK1/SERK3 and SERK4 coreceptors, and subsequent BAK1 activation by phosphorylation.

It is found in the cell membrane. The protein localises to the secreted. The protein resides in the extracellular space. Its subcellular location is the apoplast. Functionally, brassicaceae-specific phytocytokine (plant endogenous peptide released into the apoplast) perceived by MIK2 in a BAK1/SERK3 and SERK4 coreceptors-dependent manner, that modulates various physiological and antimicrobial processes including growth prevention and reactive oxygen species (ROS) response regulation. This chain is Serine rich endogenous peptide 2, found in Arabidopsis thaliana (Mouse-ear cress).